The chain runs to 288 residues: 4-hydroxybenzoate octaprenyltransferase (288 aa).

8 helical membrane passes run 23 to 43 (IGSL…GRGI), 46 to 66 (AKIL…GCVV), 98 to 118 (ILFV…NSMT), 141 to 161 (LPQV…FAAV), 163 to 183 (ESLP…TVAY), 213 to 233 (LIIG…GWLM), 234 to 254 (NLGG…THQQ), and 268 to 288 (AFLN…ISYW).

Belongs to the UbiA prenyltransferase family. Mg(2+) is required as a cofactor.

The protein resides in the cell inner membrane. The enzyme catalyses all-trans-octaprenyl diphosphate + 4-hydroxybenzoate = 4-hydroxy-3-(all-trans-octaprenyl)benzoate + diphosphate. Its pathway is cofactor biosynthesis; ubiquinone biosynthesis. Its function is as follows. Catalyzes the prenylation of para-hydroxybenzoate (PHB) with an all-trans polyprenyl group. Mediates the second step in the final reaction sequence of ubiquinone-8 (UQ-8) biosynthesis, which is the condensation of the polyisoprenoid side chain with PHB, generating the first membrane-bound Q intermediate 3-octaprenyl-4-hydroxybenzoate. The polypeptide is 4-hydroxybenzoate octaprenyltransferase (Yersinia pseudotuberculosis serotype O:1b (strain IP 31758)).